A 141-amino-acid polypeptide reads, in one-letter code: 6,7-dimethyl-8-ribityllumazine synthase (141 aa).

Residues Phe11, 42 to 44, and 66 to 68 each bind 5-amino-6-(D-ribitylamino)uracil; these read ALE and VVI. 71-72 is a binding site for (2S)-2-hydroxy-3-oxobutyl phosphate; the sequence is ET. His74 acts as the Proton donor in catalysis. Asn98 contributes to the 5-amino-6-(D-ribitylamino)uracil binding site. Arg112 contributes to the (2S)-2-hydroxy-3-oxobutyl phosphate binding site.

It belongs to the DMRL synthase family.

The enzyme catalyses (2S)-2-hydroxy-3-oxobutyl phosphate + 5-amino-6-(D-ribitylamino)uracil = 6,7-dimethyl-8-(1-D-ribityl)lumazine + phosphate + 2 H2O + H(+). Its pathway is cofactor biosynthesis; riboflavin biosynthesis; riboflavin from 2-hydroxy-3-oxobutyl phosphate and 5-amino-6-(D-ribitylamino)uracil: step 1/2. Its function is as follows. Catalyzes the formation of 6,7-dimethyl-8-ribityllumazine by condensation of 5-amino-6-(D-ribitylamino)uracil with 3,4-dihydroxy-2-butanone 4-phosphate. This is the penultimate step in the biosynthesis of riboflavin. This chain is 6,7-dimethyl-8-ribityllumazine synthase, found in Sphingopyxis alaskensis (strain DSM 13593 / LMG 18877 / RB2256) (Sphingomonas alaskensis).